Reading from the N-terminus, the 171-residue chain is Protein TIFY 11d (171 aa).

Residues 65–100 (PSAGTAPLTIFYDGRMVVVDDVPVEKAAELMRLAGS) enclose the Tify domain. Residues 117–142 (PIARKASLQRFLQKRKHRITTTSEPY) carry the Jas motif. The Nuclear localization signal signature appears at 119–126 (ARKASLQR).

Belongs to the TIFY/JAZ family. Interacts with BHLH148 and COI1A. Interacts with COI1A, COI1B and COI2 in a coronatine-dependent manner. Coronatine is an analog of jasmonoyl isoleucine (JA-Ile). Ubiquitinated. Increase in jasmonoyl isoleucine (JA-Ile) levels mediates its degradation via COI1A-mediated proteasome pathway.

The protein localises to the nucleus. Its function is as follows. Repressor of jasmonate (JA) responses. May act on an initial response of JA-regulated gene expression toward drought tolerance as part of a BHLH148-TIFY11D/JAZ12-COI1A complex. This Oryza sativa subsp. japonica (Rice) protein is Protein TIFY 11d.